The chain runs to 177 residues: Transcription antitermination protein NusB (177 aa).

Residues 1–35 (MTDSANPTPSARPPRQPRTGTTGTGARKAGSKSGR) are disordered. Residues 17–28 (PRTGTTGTGARK) are compositionally biased toward low complexity.

The protein belongs to the NusB family.

Functionally, involved in transcription antitermination. Required for transcription of ribosomal RNA (rRNA) genes. Binds specifically to the boxA antiterminator sequence of the ribosomal RNA (rrn) operons. The chain is Transcription antitermination protein NusB from Acidovorax ebreus (strain TPSY) (Diaphorobacter sp. (strain TPSY)).